Here is a 415-residue protein sequence, read N- to C-terminus: MASLFERPSLVFGAAIVLRAILLVYGAWQDAHSAVKYTDIDYMVFTDAARYVSKGDSPYARDTYRYTPLLAWLLLPTSWDGFFSFGKVLFALSDVVAGWLIAKALTSFYGMSPPRALKYASVWLLNPMVANISTRGSSEGLLCVLVIALLWAVLNRKITLAGVLLGLSVHFKIYPFVYGPSIIWWLDEEREGLKSSSQKQKPEQDDRNLLTHIFNFITPSRLLLTTTALATFSGLNISMYILYDFPFAQHTYLHHLTRIDHRHNFSPYSSLLYLSAAGDIQGSFESLAFIPQLLLSVVVIPIVLAKRSLPGAMLAQTFAFVTFNKVCTSQYFLWYLIFLPFYLPSSSLMKNPRLGITVTALWVIAQALWLQQGYYLEFLGLSSFVPGLFLASLGFFAVNIWILGIIINDVALEGC.

9 helical membrane-spanning segments follow: residues 8-28 (PSLV…YGAW), 82-102 (FFSF…WLIA), 134-154 (TRGS…WAVL), 158-178 (ITLA…PFVY), 222-242 (LLLT…MYIL), 284-304 (FESL…PIVL), 329-349 (SQYF…SSLM), 354-374 (LGIT…QQGY), and 387-407 (GLFL…GIII).

Belongs to the PIGM family.

It is found in the endoplasmic reticulum membrane. The protein operates within glycolipid biosynthesis; glycosylphosphatidylinositol-anchor biosynthesis. Functionally, mannosyltransferase involved in glycosylphosphatidylinositol-anchor biosynthesis. Transfers the first alpha-1,4-mannose to GlcN-acyl-PI during GPI precursor assembly. Required for cell wall integrity. This chain is GPI mannosyltransferase 1 (gpi14), found in Aspergillus oryzae (strain ATCC 42149 / RIB 40) (Yellow koji mold).